Here is a 375-residue protein sequence, read N- to C-terminus: MGSIEIPNCSGSIVYKTISDFIDFPDHEQKLWWHSTAPMFAEMLRVAGYDLHSQYKILGIFLNHVIPFLGVYPTRINNRWLSILTRYGTPFELSLNCSQSLVRYTYEPINSATGTVKDPFNTHSIWDALDRLMPLQKGIDLEFFKHLKQDLTVDDQDSAYLLENNLVGGQIRTQNKLALDLKGGNFVLKTYIYPALKALATGKSIKTLMFDSVYRLCRQNPSLEAPLRALEEYVDSKGPNSTASPRLLSCDLIDPSKSRVKIYILELNVTLEAMEDLWTMGGRLNDASTLAGLEMLRELWDLIKLPPGMREYPEPFLQLGTIPDEQLPLMANYTLHHDQAMPEPQVYFTTFGLNDGRVADGLVTFFERRGWNHMA.

L-tryptophan is bound by residues 83 to 84 (IL) and Glu-92. Substrate contacts are provided by Arg-103, Lys-189, and Tyr-191. L-tryptophan contacts are provided by Tyr-193 and Arg-246. Substrate is bound by residues Arg-259, Lys-261, Tyr-263, Gln-345, and Tyr-347.

It belongs to the tryptophan dimethylallyltransferase family. As to quaternary structure, homodimer.

The catalysed reaction is L-tryptophan + dimethylallyl diphosphate = 4-(3-methylbut-2-enyl)-L-tryptophan + diphosphate. The protein operates within alkaloid biosynthesis; ergot alkaloid biosynthesis. Tryptophan dimethylallyltransferase; part of the gene cluster that mediates the biosynthesis of fungal ergot alkaloid. DmaW catalyzes the first step of ergot alkaloid biosynthesis by condensing dimethylallyl diphosphate (DMAP) and tryptophan to form 4-dimethylallyl-L-tryptophan. The second step is catalyzed by the methyltransferase easF that methylates 4-dimethylallyl-L-tryptophan in the presence of S-adenosyl-L-methionine, resulting in the formation of 4-dimethylallyl-L-abrine. The catalase easC and the FAD-dependent oxidoreductase easE then transform 4-dimethylallyl-L-abrine to chanoclavine-I which is further oxidized by easD in the presence of NAD(+), resulting in the formation of chanoclavine-I aldehyde. Chanoclavine-I aldehyde is the precursor of ergoamides and ergopeptines in Clavicipitaceae, and clavine-type alcaloids such as fumiclavine in Trichocomaceae. However, the metabolites downstream of chanoclavine-I aldehyde in Arthrodermataceae have not been identified yet. This Trichophyton verrucosum (strain HKI 0517) protein is Tryptophan dimethylallyltransferase.